We begin with the raw amino-acid sequence, 83 residues long: Bublin coiled-coil protein (83 aa).

The segment at 1 to 25 (MSGPNGDLGTPVEAGAEGEEDGFGE) is disordered. Residues 25-74 (EAEYAAINSMLDQINSCLDHLEEKNDHLHARLQELLESNRQTRLEFQQQL) adopt a coiled-coil conformation. Ser-82 carries the post-translational modification Phosphoserine.

The protein belongs to the UPF0184 (EST00098) family.

It localises to the cell junction. Its subcellular location is the cytoplasm. It is found in the cytoskeleton. Functionally, essential for intermediate filament organization in intestinal cells, interacts with intermediate filament and regulates intestinal lumen morphology. This Bos taurus (Bovine) protein is Bublin coiled-coil protein (BBLN).